The sequence spans 430 residues: Serine--tRNA ligase (430 aa).

Position 237–239 (237–239 (TAE)) interacts with L-serine. 268–270 (RSE) serves as a coordination point for ATP. Residue Glu291 coordinates L-serine. 355 to 358 (EISS) serves as a coordination point for ATP. Residue Ser391 participates in L-serine binding.

The protein belongs to the class-II aminoacyl-tRNA synthetase family. Type-1 seryl-tRNA synthetase subfamily. Homodimer. The tRNA molecule binds across the dimer.

The protein localises to the cytoplasm. It catalyses the reaction tRNA(Ser) + L-serine + ATP = L-seryl-tRNA(Ser) + AMP + diphosphate + H(+). The enzyme catalyses tRNA(Sec) + L-serine + ATP = L-seryl-tRNA(Sec) + AMP + diphosphate + H(+). It functions in the pathway aminoacyl-tRNA biosynthesis; selenocysteinyl-tRNA(Sec) biosynthesis; L-seryl-tRNA(Sec) from L-serine and tRNA(Sec): step 1/1. Its function is as follows. Catalyzes the attachment of serine to tRNA(Ser). Is also able to aminoacylate tRNA(Sec) with serine, to form the misacylated tRNA L-seryl-tRNA(Sec), which will be further converted into selenocysteinyl-tRNA(Sec). This is Serine--tRNA ligase from Salmonella schwarzengrund (strain CVM19633).